The sequence spans 383 residues: tRNA-specific 2-thiouridylase MnmA (383 aa).

ATP is bound by residues 9-16 and Met-35; that span reads GMSGGVDS. The segment at 95 to 97 is interaction with target base in tRNA; the sequence is NPD. Cys-100 (nucleophile) is an active-site residue. A disulfide bridge connects residues Cys-100 and Cys-196. Gly-124 is an ATP binding site. The interval 146–148 is interaction with tRNA; the sequence is KDQ. The Cysteine persulfide intermediate role is filled by Cys-196. Residues 308-309 are interaction with tRNA; that stretch reads RY.

The protein belongs to the MnmA/TRMU family.

It is found in the cytoplasm. It carries out the reaction S-sulfanyl-L-cysteinyl-[protein] + uridine(34) in tRNA + AH2 + ATP = 2-thiouridine(34) in tRNA + L-cysteinyl-[protein] + A + AMP + diphosphate + H(+). Functionally, catalyzes the 2-thiolation of uridine at the wobble position (U34) of tRNA, leading to the formation of s(2)U34. This chain is tRNA-specific 2-thiouridylase MnmA, found in Burkholderia pseudomallei (strain 1106a).